Consider the following 133-residue polypeptide: Putative redox protein FMP46, mitochondrial (133 aa).

A mitochondrion-targeting transit peptide spans 1 to 21 (MSFWKTLQRQPRTISLFTNDI). Cysteine 97 is an active-site residue.

The protein belongs to the FMP46 family.

The protein localises to the mitochondrion. In terms of biological role, putative mitochondrial redox protein which could be involved in the reduction of small toxic molecules. This Saccharomyces cerevisiae (strain ATCC 204508 / S288c) (Baker's yeast) protein is Putative redox protein FMP46, mitochondrial (FMP46).